Reading from the N-terminus, the 391-residue chain is Succinate--CoA ligase [ADP-forming] subunit beta (391 aa).

An ATP-grasp domain is found at 9 to 248; sequence KDILRKFGVS…TGEEDPFEVE (240 aa). Residues Lys50, 57 to 59, Glu103, Met106, and Glu111 contribute to the ATP site; that span reads GRG. Mg(2+) is bound by residues Asn203 and Asp217. Substrate-binding positions include Asn268 and 325-327; that span reads GIV.

Belongs to the succinate/malate CoA ligase beta subunit family. As to quaternary structure, heterotetramer of two alpha and two beta subunits. Mg(2+) serves as cofactor.

It catalyses the reaction succinate + ATP + CoA = succinyl-CoA + ADP + phosphate. It carries out the reaction GTP + succinate + CoA = succinyl-CoA + GDP + phosphate. Its pathway is carbohydrate metabolism; tricarboxylic acid cycle; succinate from succinyl-CoA (ligase route): step 1/1. In terms of biological role, succinyl-CoA synthetase functions in the citric acid cycle (TCA), coupling the hydrolysis of succinyl-CoA to the synthesis of either ATP or GTP and thus represents the only step of substrate-level phosphorylation in the TCA. The beta subunit provides nucleotide specificity of the enzyme and binds the substrate succinate, while the binding sites for coenzyme A and phosphate are found in the alpha subunit. The sequence is that of Succinate--CoA ligase [ADP-forming] subunit beta from Chlorobium phaeobacteroides (strain BS1).